Reading from the N-terminus, the 394-residue chain is G2/mitotic-specific cyclin-B (394 aa).

A disordered region spans residues Gln360 to Arg394. Over residues Lys379–Arg394 the composition is skewed to polar residues.

This sequence belongs to the cyclin family. Cyclin AB subfamily. As to quaternary structure, interacts with the CDK1 protein kinase to form a serine/threonine kinase holoenzyme complex also known as maturation promoting factor (MPF). The cyclin subunit imparts substrate specificity to the complex.

Its function is as follows. Essential for the control of the cell cycle at the G2/M (mitosis) transition. This chain is G2/mitotic-specific cyclin-B, found in Patiria pectinifera (Starfish).